Here is an 89-residue protein sequence, read N- to C-terminus: Large ribosomal subunit protein bL27 (89 aa).

The segment at 1–22 is disordered; it reads MAHKKAGGSSRNGRDSAGRRLG.

This sequence belongs to the bacterial ribosomal protein bL27 family.

The protein is Large ribosomal subunit protein bL27 of Dinoroseobacter shibae (strain DSM 16493 / NCIMB 14021 / DFL 12).